Reading from the N-terminus, the 1481-residue chain is Structural protein ORF147 (1481 aa).

Disordered regions lie at residues 65-88 and 1319-1403; these read AEKR…ENLE and DEKL…PPIP. Composition is skewed to low complexity over residues 73–84, 1323–1336, and 1393–1403; these read KGSQKKSNSSSS, SSTV…SPKT, and SSRTTITPPIP.

It localises to the virion. The sequence is that of Structural protein ORF147 from Noctuidae (owlet moths).